Reading from the N-terminus, the 89-residue chain is Heat shock protein 30A (89 aa).

2 stretches are compositionally biased toward basic and acidic residues: residues 1–11 and 19–39; these read MRNNVERRMQR and LSKD…RESE. The interval 1 to 55 is disordered; the sequence is MRNNVERRMQRVNEACRLLSKDTEMRRITDQNRQSRESEGTSPNSGKDGKDHFEL. The sHSP domain occupies 35–89; sequence SRESEGTSPNSGKDGKDHFELTLNVRDFSPHELTVKTQGRRVIVTGKHERKSDTE.

It belongs to the small heat shock protein (HSP20) family.

The sequence is that of Heat shock protein 30A (hsp30a) from Xenopus laevis (African clawed frog).